We begin with the raw amino-acid sequence, 191 residues long: Inosine triphosphate pyrophosphatase (191 aa).

15–20 contributes to the ITP binding site; it reads TGNANK. Residue Glu-43 participates in Mg(2+) binding. Residues Lys-55, 71–72, Lys-88, 147–150, Lys-168, and 173–174 contribute to the ITP site; these read DT, FGWD, and HR.

This sequence belongs to the HAM1 NTPase family. In terms of assembly, homodimer. The cofactor is Mg(2+). Requires Mn(2+) as cofactor.

The protein resides in the cytoplasm. It is found in the nucleus. The enzyme catalyses ITP + H2O = IMP + diphosphate + H(+). It catalyses the reaction dITP + H2O = dIMP + diphosphate + H(+). The catalysed reaction is XTP + H2O = XMP + diphosphate + H(+). Functionally, pyrophosphatase that hydrolyzes non-canonical purine nucleotides such as inosine triphosphate (ITP), deoxyinosine triphosphate (dITP) or xanthosine 5'-triphosphate (XTP) to their respective monophosphate derivatives. The enzyme does not distinguish between the deoxy- and ribose forms. Probably excludes non-canonical purines from RNA and DNA precursor pools, thus preventing their incorporation into RNA and DNA and avoiding chromosomal lesions. The sequence is that of Inosine triphosphate pyrophosphatase from Neurospora crassa (strain ATCC 24698 / 74-OR23-1A / CBS 708.71 / DSM 1257 / FGSC 987).